Reading from the N-terminus, the 937-residue chain is Protein translocase subunit SecA (937 aa).

Residues glutamine 86, 104-108 (GEGKT), and aspartate 493 each bind ATP. The disordered stretch occupies residues 868-889 (LERPSQPTKLAYSAPSEDGDAE). Residues cysteine 911, cysteine 913, cysteine 922, and histidine 923 each contribute to the Zn(2+) site. Residues 915-937 (SGKKFKQCHGRPGGPTGLTARVS) form a disordered region.

It belongs to the SecA family. Monomer and homodimer. Part of the essential Sec protein translocation apparatus which comprises SecA, SecYEG and auxiliary proteins SecDF. Other proteins may also be involved. It depends on Zn(2+) as a cofactor.

It is found in the cell membrane. Its subcellular location is the cytoplasm. It catalyses the reaction ATP + H2O + cellular proteinSide 1 = ADP + phosphate + cellular proteinSide 2.. Functionally, part of the Sec protein translocase complex. Interacts with the SecYEG preprotein conducting channel. Has a central role in coupling the hydrolysis of ATP to the transfer of proteins into and across the cell membrane, serving as an ATP-driven molecular motor driving the stepwise translocation of polypeptide chains across the membrane. In Nocardioides sp. (strain ATCC BAA-499 / JS614), this protein is Protein translocase subunit SecA.